Here is a 158-residue protein sequence, read N- to C-terminus: 6,7-dimethyl-8-ribityllumazine synthase (158 aa).

5-amino-6-(D-ribitylamino)uracil-binding positions include Phe23, 61-63 (SFE), and 85-87 (AVI). 90–91 (DT) provides a ligand contact to (2S)-2-hydroxy-3-oxobutyl phosphate. His93 functions as the Proton donor in the catalytic mechanism. Phe118 serves as a coordination point for 5-amino-6-(D-ribitylamino)uracil. Position 132 (Arg132) interacts with (2S)-2-hydroxy-3-oxobutyl phosphate.

This sequence belongs to the DMRL synthase family.

It catalyses the reaction (2S)-2-hydroxy-3-oxobutyl phosphate + 5-amino-6-(D-ribitylamino)uracil = 6,7-dimethyl-8-(1-D-ribityl)lumazine + phosphate + 2 H2O + H(+). The protein operates within cofactor biosynthesis; riboflavin biosynthesis; riboflavin from 2-hydroxy-3-oxobutyl phosphate and 5-amino-6-(D-ribitylamino)uracil: step 1/2. Catalyzes the formation of 6,7-dimethyl-8-ribityllumazine by condensation of 5-amino-6-(D-ribitylamino)uracil with 3,4-dihydroxy-2-butanone 4-phosphate. This is the penultimate step in the biosynthesis of riboflavin. This is 6,7-dimethyl-8-ribityllumazine synthase from Prochlorococcus marinus (strain NATL1A).